A 62-amino-acid polypeptide reads, in one-letter code: Large ribosomal subunit protein uL30 (62 aa).

The protein belongs to the universal ribosomal protein uL30 family. Part of the 50S ribosomal subunit.

This Prosthecochloris aestuarii (strain DSM 271 / SK 413) protein is Large ribosomal subunit protein uL30.